The primary structure comprises 209 residues: D-aminoacyl-tRNA deacylase 1 (209 aa).

Mg(2+) is bound by residues V4, Q6, and C28. A Gly-cisPro motif, important for rejection of L-amino acids motif is present at residues 139–140; it reads GP. The interval 142–209 is disordered; sequence TIELESPAPG…EGDVSSEREP (68 aa). Composition is skewed to basic and acidic residues over residues 159–170 and 181–194; these read QLSKLEKQQQRK and SSKE…EDRS. Phosphoserine occurs at positions 197, 204, and 205.

Belongs to the DTD family. Homodimer. Interacts with CDC45 and TOPBP1. Post-translationally, preferentially phosphorylated in cells arrested early in S phase. Phosphorylation in the C-terminus weakens the interaction with CDC45. In terms of tissue distribution, expressed in many adult and fetal tissues. Highest levels in testis, ovary, spleen and in adult and fetal brain.

The protein resides in the nucleus. It localises to the cytoplasm. The enzyme catalyses glycyl-tRNA(Ala) + H2O = tRNA(Ala) + glycine + H(+). It carries out the reaction a D-aminoacyl-tRNA + H2O = a tRNA + a D-alpha-amino acid + H(+). Its function is as follows. Possible ATPase involved in DNA replication, may facilitate loading of CDC45 onto pre-replication complexes. In terms of biological role, an aminoacyl-tRNA editing enzyme that deacylates mischarged D-aminoacyl-tRNAs. Also deacylates mischarged glycyl-tRNA(Ala), protecting cells against glycine mischarging by AlaRS. Acts via tRNA-based rather than protein-based catalysis; rejects L-amino acids rather than detecting D-amino acids in the active site. By recycling D-aminoacyl-tRNA to D-amino acids and free tRNA molecules, this enzyme counteracts the toxicity associated with the formation of D-aminoacyl-tRNA entities in vivo and helps enforce protein L-homochirality. This chain is D-aminoacyl-tRNA deacylase 1 (DTD1), found in Homo sapiens (Human).